Here is a 400-residue protein sequence, read N- to C-terminus: Subtilisin-like protease 11 (400 aa).

The signal sequence occupies residues 1–19; sequence MGLFKVIFTAVAALSAVDA. Positions 20 to 117 are excised as a propeptide; sequence AELLSSAKSK…VEHDRHVYIS (98 aa). One can recognise an Inhibitor I9 domain in the interval 35-116; the sequence is SYLVVMKDSV…FVEHDRHVYI (82 aa). Residues 127–400 enclose the Peptidase S8 domain; that stretch reads SWGLGRVSHR…NKLLYNRSGK (274 aa). The N-linked (GlcNAc...) asparagine glycan is linked to N138. Catalysis depends on D159, which acts as the Charge relay system. N-linked (GlcNAc...) asparagine glycosylation is present at N181. The active-site Charge relay system is the H191. N-linked (GlcNAc...) asparagine glycosylation is found at N252 and N337. The active-site Charge relay system is S346. 2 N-linked (GlcNAc...) asparagine glycosylation sites follow: N388 and N396.

This sequence belongs to the peptidase S8 family.

It is found in the secreted. Its function is as follows. Secreted subtilisin-like serine protease with keratinolytic activity that contributes to pathogenicity. This is Subtilisin-like protease 11 (SUB11) from Trichophyton verrucosum (strain HKI 0517).